The chain runs to 443 residues: Proline--tRNA ligase (443 aa).

Belongs to the class-II aminoacyl-tRNA synthetase family. ProS type 2 subfamily. Homodimer.

It localises to the cytoplasm. The enzyme catalyses tRNA(Pro) + L-proline + ATP = L-prolyl-tRNA(Pro) + AMP + diphosphate. In terms of biological role, catalyzes the attachment of proline to tRNA(Pro) in a two-step reaction: proline is first activated by ATP to form Pro-AMP and then transferred to the acceptor end of tRNA(Pro). This is Proline--tRNA ligase from Zymomonas mobilis subsp. mobilis (strain ATCC 10988 / DSM 424 / LMG 404 / NCIMB 8938 / NRRL B-806 / ZM1).